Reading from the N-terminus, the 120-residue chain is UPF0231 protein YacL (120 aa).

Belongs to the UPF0231 family.

The protein is UPF0231 protein YacL of Escherichia coli O6:K15:H31 (strain 536 / UPEC).